A 154-amino-acid polypeptide reads, in one-letter code: Ribonuclease H (154 aa).

The region spanning 1–142 (MEKTVEIYTD…VDDLARDAAG (142 aa)) is the RNase H type-1 domain. The Mg(2+) site is built by Asp10, Glu48, Asp70, and Asp134.

The protein belongs to the RNase H family. In terms of assembly, monomer. The cofactor is Mg(2+).

It is found in the cytoplasm. It catalyses the reaction Endonucleolytic cleavage to 5'-phosphomonoester.. In terms of biological role, endonuclease that specifically degrades the RNA of RNA-DNA hybrids. In Pseudoalteromonas translucida (strain TAC 125), this protein is Ribonuclease H.